Reading from the N-terminus, the 122-residue chain is U1 small nuclear ribonucleoprotein C (122 aa).

The segment at 4–36 adopts a Matrin-type zinc-finger fold; it reads YFCDYCDTYLTHDSPSVRKTHCSGRKHKDNVKM.

Belongs to the U1 small nuclear ribonucleoprotein C family. As to quaternary structure, U1 snRNP is composed of the 7 core Sm proteins B/B', D1, D2, D3, E, F and G that assemble in a heptameric protein ring on the Sm site of the small nuclear RNA to form the core snRNP, and at least 3 U1 snRNP-specific proteins U1-70K, U1-A and U1-C. U1-C interacts with U1 snRNA and the 5' splice-site region of the pre-mRNA.

It is found in the nucleus. Its function is as follows. Component of the spliceosomal U1 snRNP, which is essential for recognition of the pre-mRNA 5' splice-site and the subsequent assembly of the spliceosome. U1-C is directly involved in initial 5' splice-site recognition for both constitutive and regulated alternative splicing. The interaction with the 5' splice-site seems to precede base-pairing between the pre-mRNA and the U1 snRNA. Stimulates commitment or early (E) complex formation by stabilizing the base pairing of the 5' end of the U1 snRNA and the 5' splice-site region. This is U1 small nuclear ribonucleoprotein C from Ciona intestinalis (Transparent sea squirt).